The chain runs to 145 residues: Ecdysteroid-regulated 16 kDa protein (145 aa).

The signal sequence occupies residues 1–16 (MLFYITVTVLLVSAQA). 2 disulfide bridges follow: cysteine 22/cysteine 137 and cysteine 90/cysteine 97. The N-linked (GlcNAc...) asparagine glycan is linked to asparagine 51.

This sequence belongs to the NPC2 family.

It localises to the secreted. In Manduca sexta (Tobacco hawkmoth), this protein is Ecdysteroid-regulated 16 kDa protein (ESR16).